Here is a 38-residue protein sequence, read N- to C-terminus: Kappa-theraphotoxin-Hm2a (38 aa).

3 disulfides stabilise this stretch: cysteine 2–cysteine 16, cysteine 9–cysteine 21, and cysteine 15–cysteine 32. The residue at position 38 (phenylalanine 38) is a Phenylalanine amide.

The protein belongs to the neurotoxin 10 (Hwtx-1) family. 13 (Hntx-13) subfamily. As to expression, expressed by the venom gland.

The protein localises to the secreted. Inhibitor of voltage-gated potassium channels. It specifically inhibits Kv2.1/KCNB1 channels. This Heteroscodra maculata (Togo starburst tarantula) protein is Kappa-theraphotoxin-Hm2a.